Here is a 92-residue protein sequence, read N- to C-terminus: DNA-directed RNA polymerase subunit omega (92 aa).

The protein belongs to the RNA polymerase subunit omega family. In terms of assembly, the RNAP catalytic core consists of 2 alpha, 1 beta, 1 beta' and 1 omega subunit. When a sigma factor is associated with the core the holoenzyme is formed, which can initiate transcription.

The enzyme catalyses RNA(n) + a ribonucleoside 5'-triphosphate = RNA(n+1) + diphosphate. Its function is as follows. Promotes RNA polymerase assembly. Latches the N- and C-terminal regions of the beta' subunit thereby facilitating its interaction with the beta and alpha subunits. The sequence is that of DNA-directed RNA polymerase subunit omega from Shewanella baltica (strain OS223).